The following is a 168-amino-acid chain: G/U mismatch-specific DNA glycosylase (168 aa).

This sequence belongs to the uracil-DNA glycosylase (UDG) superfamily. TDG/mug family. In terms of assembly, binds DNA as a monomer.

The protein localises to the cytoplasm. The enzyme catalyses Specifically hydrolyzes mismatched double-stranded DNA and polynucleotides, releasing free uracil.. In terms of biological role, excises ethenocytosine and uracil, which can arise by alkylation or deamination of cytosine, respectively, from the corresponding mispairs with guanine in ds-DNA. It is capable of hydrolyzing the carbon-nitrogen bond between the sugar-phosphate backbone of the DNA and the mispaired base. The complementary strand guanine functions in substrate recognition. Required for DNA damage lesion repair in stationary-phase cells. In Escherichia coli (strain UTI89 / UPEC), this protein is G/U mismatch-specific DNA glycosylase.